The chain runs to 95 residues: Alpha-bungarotoxin, isoform A31 (95 aa).

Residues 1-21 form the signal peptide; the sequence is MKTLLLTLVVVTIVCLDLGYT. Cystine bridges form between Cys-24–Cys-44, Cys-37–Cys-65, Cys-50–Cys-54, Cys-69–Cys-80, and Cys-81–Cys-86.

It belongs to the three-finger toxin family. Long-chain subfamily. Type II alpha-neurotoxin sub-subfamily. In terms of assembly, monomer in solution, homodimer in crystal state. As to expression, expressed by the venom gland.

The protein localises to the secreted. Binds with high affinity to muscular (tested on Torpedo marmorata, Kd=0.4 nM) and neuronal (tested on chimeric alpha-7/CHRNA7, Kd=0.95 nM) nicotinic acetylcholine receptor (nAChR) and inhibits acetylcholine from binding to the receptor, thereby impairing neuromuscular and neuronal transmission. It also shows an activity on GABA(A) receptors. It antagonises GABA-activated currents with high potency when tested on primary hippocampal neurons. It inhibits recombinantly expressed GABA(A) receptors composed of alpha-2-beta-2-gamma-2 (GABRA2-GABRB2-GABRG2) subunits with high potency (62.3% inhibition at 20 uM of toxin). It also shows a weaker inhibition on GABA(A) receptors composed of alpha-1-beta-2-gamma-2 (GABRA1-GABRB2-GABRG2) subunits, alpha-4-beta-2-gamma-2 (GABRA4-GABRB2-GABRG2) subunits, and alpha-5-beta-2-gamma-2 (GABRA5-GABRB2-GABRG2) subunits. A very weak inhibition is also observed on GABA(A) receptor composed of alpha-1-beta-3-gamma-2 (GABRA1-GABRB3-GABRG2). It has also been shown to bind and inhibit recombinant GABA(A) receptor beta-3/GABRB3 subunit (Kd=about 50 nM). In addition, it blocks the extracellular increase of dopamine evoked by nicotine only at the higher dose (4.2 uM). In vivo, when intraperitoneally injected into mice, induces flaccid paralysis of the limbs and respiratory distress, and causes death in a dose-dependent manner. This chain is Alpha-bungarotoxin, isoform A31, found in Bungarus candidus (Malayan krait).